The following is a 253-amino-acid chain: Chorismate mutase 2, cytosolic (253 aa).

The region spanning 2 to 253 (DAAGGDQLSL…EVEYLLRRLD (252 aa)) is the Chorismate mutase domain.

In terms of assembly, homodimer. Interacts with Cmu1 of the fungal pathogen Ustilago maydis.

The protein localises to the cytoplasm. Its subcellular location is the cytosol. It catalyses the reaction chorismate = prephenate. Its pathway is metabolic intermediate biosynthesis; prephenate biosynthesis; prephenate from chorismate: step 1/1. No allosteric regulation. The chain is Chorismate mutase 2, cytosolic from Zea mays (Maize).